The following is a 383-amino-acid chain: Protein delta homolog 2 (383 aa).

A signal peptide spans 1 to 26 (MPSGCRCLHLVCLLCILGAPGQPVRA). EGF-like domains follow at residues 27–58 (DDCS…LHCE), 62–89 (RMPG…KFCD), 91–129 (DEHI…RDCE), and 131–172 (KAGP…ARCE). At 27–306 (DDCSSHCDLA…RQEAGLGEPS (280 aa)) the chain is on the extracellular side. Disulfide bonds link cysteine 29-cysteine 40, cysteine 33-cysteine 46, cysteine 48-cysteine 57, cysteine 66-cysteine 71, cysteine 79-cysteine 88, cysteine 95-cysteine 107, cysteine 101-cysteine 117, cysteine 119-cysteine 128, cysteine 135-cysteine 148, cysteine 142-cysteine 160, cysteine 162-cysteine 171, cysteine 178-cysteine 189, cysteine 183-cysteine 198, cysteine 200-cysteine 209, cysteine 216-cysteine 227, cysteine 221-cysteine 236, and cysteine 238-cysteine 247. Asparagine 157 is a glycosylation site (N-linked (GlcNAc...) asparagine). Residues 174 to 210 (NVDDCLMRPCANGATCLDGINRFSCLCPEGFAGRFCT) form the EGF-like 5; calcium-binding domain. The EGF-like 6; calcium-binding domain occupies 212-248 (NLDDCASRPCQRGARCRDRVHDFDCLCPSGYGGKTCE). The chain crosses the membrane as a helical span at residues 307–327 (LVALVVFGALTAALVLATVLL). The Cytoplasmic segment spans residues 328–383 (TLRAWRRGVCPPGPCCYPAPHYAPACQDQECQVSMLPAGLPLPRDLPPEPGKTTAL).

It is found in the membrane. Regulates adipogenesis. This Homo sapiens (Human) protein is Protein delta homolog 2 (DLK2).